The chain runs to 819 residues: MASSLVFVALVGALCFTLANAQHHYDEHKTTRMVWCTKSQAEQYKCQNLTVAIERDRALFDEVFLNLTCFMAYSADECIHHIDREKAHITTLDAGDVFTAGRYNSLIPIMQEKLEGGFADYQSVAVIKKGSLPDLNNLRDMRNKRVCFPWVGSLAGWIVPIHTLQREGGMEVVDCNNQVKTAASYFNNSCAVYSLSDKHNPIGDNSDKLCTLCTGKIPGGRCSSADPYFGYEGAFKCLLEKGDVAFLRHSTVNEMLQTTEFKNIAPDTFELLCRDGRRASINDYRQCNWGQVPADAIVTSSARSFSDRKQYQQFLKRIAELYSDGTRDDQSRQGGQSFNSRNNINDQNAYGQFDNNDPYRTQNQYDQYRSERLDSSFAEERNQQDGTNTSILYEKFRIFESKRYGKPNLLFQDSSRALTVIPEDDQSFTKYLGPAINFIYGIRECPVPAMTLCVTSENELDKCIKMRTALKAHLLKPELICKKMHSHINCMQFIEAGKADISVFDAGDVYTGGLNYDLVPFMSEVYNLGEPEYYVVAVAKEDDPDTELTYLKGKNTCHTGINTAAGWTYPMALFISNGWIRPYGCDSVRAAAEYFTKSCVPGAISNEYNTGVPYDSMCDLCHGTSYRYCRRDASEEYYGHTGAFRCLVEGGGHVAFMKHTTVMESTGGKRKEWWARNALNDDFELLCTDGTRAEIQDYKRCNLGKVKANAVVTRGGVNYNETQMNAYINLLTYAQQLYGRKEVDAFSFSMFSSPIGHYDLIFQDATRQLQVIPPNKRRYDAYLGSDFMRARRITDCYAGASQLALSVGLLLVGSLVAML.

A signal peptide spans 1–21; the sequence is MASSLVFVALVGALCFTLANA. The region spanning 33–373 is the Transferrin-like 1 domain; it reads MVWCTKSQAE…QYDQYRSERL (341 aa). Cystine bridges form between Cys36–Cys78 and Cys46–Cys69. Residues Asn48 and Asn66 are each glycosylated (N-linked (GlcNAc...) asparagine). The Fe(3+) site is built by Asp93 and Tyr121. Intrachain disulfides connect Cys147/Cys237, Cys190/Cys213, and Cys273/Cys287. Positions 155 and 156 each coordinate hydrogencarbonate. A glycan (N-linked (GlcNAc...) asparagine) is linked at Asn187. A Fe(3+)-binding site is contributed by Tyr231. The interval 325-361 is disordered; that stretch reads GTRDDQSRQGGQSFNSRNNINDQNAYGQFDNNDPYRT. The segment covering 332 to 361 has biased composition (polar residues); it reads RQGGQSFNSRNNINDQNAYGQFDNNDPYRT. A glycan (N-linked (GlcNAc...) asparagine) is linked at Asn388. A Transferrin-like 2 domain is found at 450–796; sequence MTLCVTSENE…FMRARRITDC (347 aa). 2 cysteine pairs are disulfide-bonded: Cys453–Cys490 and Cys463–Cys481. Fe(3+) contacts are provided by Asp505 and Tyr533. 4 disulfide bridges follow: Cys557-Cys646, Cys599-Cys621, Cys618-Cys629, and Cys687-Cys701. Positions 559, 565, and 566 each coordinate hydrogencarbonate. An N-linked (GlcNAc...) asparagine glycan is attached at Asn720. Cys796 is lipidated: GPI-anchor amidated cysteine. A propeptide spans 797-819 (removed in mature form); the sequence is YAGASQLALSVGLLLVGSLVAML.

The protein belongs to the transferrin family. As to quaternary structure, forms a complex composed of septa junction proteins Nrx-IV/Nrx, Tsf2/MTf, Cont and Nrg during late embryogenesis.

It localises to the apicolateral cell membrane. The protein localises to the cell junction. Its subcellular location is the septate junction. In terms of biological role, iron-binding protein and component of septate junctions that form the paracellular permeability barrier in epithelial tissues. In an iron-dependent manner, required for septate junction assembly during epithelial maturation in embryos and mature septa junctions stability. In Drosophila melanogaster (Fruit fly), this protein is Transferrin 2.